A 408-amino-acid chain; its full sequence is Zinc finger and SCAN domain-containing protein 1 (408 aa).

Residues 1 to 34 (MLPRPKAPASPRRPQTPTPSEQDADPGPASPRDT) form a disordered region. Positions 38 to 120 (RLRFRQFQYH…SLVEDLTQMC (83 aa)) constitute an SCAN box domain. 3 disordered regions span residues 136–155 (WSFG…EPSQ), 177–203 (LETT…LLGS), and 215–273 (DEPE…GGTQ). Over residues 177 to 187 (LETTQLQQSLH) the composition is skewed to polar residues. 2 C2H2-type zinc fingers span residues 292–314 (FQCA…QKTH) and 320–342 (FPCP…GKIH). The segment at 344 to 379 (LEPPRKKAPRSKGPRESVPPRDGAQGPVAPRSPKRP) is disordered. The C2H2-type 3 zinc finger occupies 380–402 (FQCSVCGKAFPWMVHLIDHQKLH).

Its subcellular location is the nucleus. In terms of biological role, may be involved in transcriptional regulation. In Homo sapiens (Human), this protein is Zinc finger and SCAN domain-containing protein 1 (ZSCAN1).